Here is a 639-residue protein sequence, read N- to C-terminus: Sodium-dependent phosphate transport protein 2A (639 aa).

Residues 1-103 (MISYGENLGG…LRRAGVTLLK (103 aa)) lie on the Cytoplasmic side of the membrane. Ser-14 and Ser-34 each carry phosphoserine. A helical transmembrane segment spans residues 104 to 125 (VPLMLSFLYLFVCSLDVLSSAF). At 126-145 (QLAGGKVAGDIFKDNAILSN) the chain is on the extracellular side. A helical membrane pass occupies residues 146–163 (PVAGLVVGILVTVLVQSS). At 164 to 165 (ST) the chain is on the cytoplasmic side. A helical transmembrane segment spans residues 166–185 (STSIVVSMVSSGLLEVSSAI). The Extracellular portion of the chain corresponds to 186–347 (PIIMGSNIGT…HIFVDTGLPD (162 aa)). Disulfide bonds link Cys-225–Cys-522 and Cys-306–Cys-336. N-linked (GlcNAc...) asparagine glycosylation is found at Asn-298, Asn-323, and Asn-330. The chain crosses the membrane as a helical span at residues 348–370 (LAVGLILLAGSLALLCTCLILLV). Residues 371–412 (KMLNSLLKGQVAKVIQKVINTDFPTPFTWATGYFAMVVGASM) are Cytoplasmic-facing. Residues 413-436 (TFVVQSSSVFTSAITPLIGLGVIS) form a helical membrane-spanning segment. Over 437–466 (IERAYPLTLGSNIGTTTTAILAALASPREK) the chain is Extracellular. The chain crosses the membrane as a helical span at residues 467-487 (LSSAFQIALCHFFFNISGILL). The Cytoplasmic portion of the chain corresponds to 488–513 (WYPVPCTRLPIRMAKALGKRTAKYRW). The residue at position 508 (Thr-508) is a Phosphothreonine; by PKC. The helical transmembrane segment at 514–534 (FAVLYLLLCFLLLPSMVFGLS) threads the bilayer. Residues 535-539 (MAGWR) are Extracellular-facing. Residues 540 to 561 (AMVGVGAPFGALLAFVVLVSAL) form a helical membrane-spanning segment. The Cytoplasmic segment spans residues 562–639 (QHRSPGCLPK…MPHHHDATRL (78 aa)). Position 607 is a phosphoserine (Ser-607). The residue at position 623 (Thr-623) is a Phosphothreonine. Ser-625 carries the post-translational modification Phosphoserine.

It belongs to the SLC34A transporter family. Interacts via its C-terminal region with NHERF4. Interacts with NHERF1. Interacts with TMEM174; regulates SLC34A1 internalization by PTH and FGF23.

The protein localises to the apical cell membrane. Its subcellular location is the cell membrane. The catalysed reaction is 3 Na(+)(out) + phosphate(out) = 3 Na(+)(in) + phosphate(in). Involved in actively transporting phosphate into cells via Na(+) cotransport in the renal brush border membrane. The cotransport has a Na(+):Pi stoichiometry of 3:1 and is electrogenic. The protein is Sodium-dependent phosphate transport protein 2A of Ovis aries (Sheep).